The following is a 579-amino-acid chain: MFS-type transporter ppz2 (579 aa).

The segment at 1 to 23 (MQTATALEDSANAPSPAASSQGQ) is disordered. The span at 10–20 (SANAPSPAASS) shows a compositional bias: low complexity. Residue Asn-38 is glycosylated (N-linked (GlcNAc...) asparagine). The next 14 helical transmembrane spans lie at 48–68 (ALIMVALCCAVFLHALDNTII), 83–103 (AAYTWIGSTYLLAVAASTMVW), 121–141 (LCFFTGSLIAALSANFAMLIA), 145–165 (IQGIGGAGVNVLANICVGDLF), 171–191 (GLYYGVIGGVWAVALSLGPVV), 203–223 (WCFYINLPLCAVVFVIIILLL), 236–256 (IAAIDWVGAALSIGSTLMILL), 269–289 (SATVICLVVFGFIGWILCFSW), 298–318 (LLPVSIFKQIPTLAVLAACFI), 336–356 (AVLGATPILSGVYLLPTAVSI), 374–394 (LTPIYIGFVLQTLGYGLFIDL), 403–423 (IIVFQIIGGLGVGFNFQAPMV), 438–460 (TSAYNFMRNVSGAISVVIGQTVF), and 516–536 (SMWIMYTAFSAAALVVCPFLG).

Belongs to the major facilitator superfamily. TCR/Tet family.

It is found in the membrane. In terms of biological role, MFS-type transporter; part of the gene cluster that mediates the biosynthesis of pyrrolopyrazines, secondary metabolites showing insecticidal activity. Probably involved in the secretion of peramine and other pyrrolopyrazines. The polypeptide is MFS-type transporter ppz2 (Metarhizium majus (strain ARSEF 297)).